The following is a 378-amino-acid chain: Dual-specificity RNA methyltransferase RlmN 2 (378 aa).

Glutamate 113 serves as the catalytic Proton acceptor. In terms of domain architecture, Radical SAM core spans threonine 119–arginine 355. Cysteine 126 and cysteine 361 are joined by a disulfide. Residues cysteine 133, cysteine 137, and cysteine 140 each coordinate [4Fe-4S] cluster. S-adenosyl-L-methionine contacts are provided by residues glycine 188–glutamate 189, serine 220, serine 242–asparagine 244, and asparagine 318. Cysteine 361 acts as the S-methylcysteine intermediate in catalysis.

The protein belongs to the radical SAM superfamily. RlmN family. [4Fe-4S] cluster is required as a cofactor.

Its subcellular location is the cytoplasm. The enzyme catalyses adenosine(2503) in 23S rRNA + 2 reduced [2Fe-2S]-[ferredoxin] + 2 S-adenosyl-L-methionine = 2-methyladenosine(2503) in 23S rRNA + 5'-deoxyadenosine + L-methionine + 2 oxidized [2Fe-2S]-[ferredoxin] + S-adenosyl-L-homocysteine. It carries out the reaction adenosine(37) in tRNA + 2 reduced [2Fe-2S]-[ferredoxin] + 2 S-adenosyl-L-methionine = 2-methyladenosine(37) in tRNA + 5'-deoxyadenosine + L-methionine + 2 oxidized [2Fe-2S]-[ferredoxin] + S-adenosyl-L-homocysteine. Functionally, specifically methylates position 2 of adenine 2503 in 23S rRNA and position 2 of adenine 37 in tRNAs. m2A2503 modification seems to play a crucial role in the proofreading step occurring at the peptidyl transferase center and thus would serve to optimize ribosomal fidelity. In Myxococcus xanthus (strain DK1622), this protein is Dual-specificity RNA methyltransferase RlmN 2.